A 353-amino-acid chain; its full sequence is MNTIKIKLNLIDYDSIVNIEFPCLLSEIEIELLSQLLKGYSVNEISKRRNRSIKTVSCQKMKLYKKLNVKSDLTLWRDVFLRFKAYLQPKNIICDNFNSSVLPVVSSKGESMAHYNIYYQPIYNAKNGNIAGCDVTIALKNSDGSAFALDSDRINYNPNDNKVSYLFGHINKLFSPIKNNLPHGFFITININPEDILTCDIERECLHFIKVFGTERIRLVLQFSTKEELYIIRRYQSSLRRIRNNNVYLSLNDFGMGYAELSHLQNIPFSYVNLHKTMFHDIESNSLTDIIATTIIDLSKQLHIDVIADGIETKKQAGYMIERGVKYLKGIALSSPLPADAFVRKLLASLKQV.

In terms of domain architecture, HTH luxR-type spans 18 to 83 (NIEFPCLLSE…TLWRDVFLRF (66 aa)). Residues 42–61 (VNEISKRRNRSIKTVSCQKM) constitute a DNA-binding region (H-T-H motif). Positions 98 to 350 (NSSVLPVVSS…AFVRKLLASL (253 aa)) constitute an EAL domain.

This is an uncharacterized protein from Escherichia coli (strain K12).